A 149-amino-acid chain; its full sequence is Calmodulin-like protein 3 (149 aa).

4 consecutive EF-hand domains span residues 8 to 43 (EQIAEFKEAFSLFDKDGDGSITTQELGTVMRSLGQN), 44 to 79 (PTEAELQGMVNEIDKDGNGTVDFPEFLTMMSRKMKD), 81 to 116 (DSEEEIREAFRVFDKDGNGFVSAAELRHVMTKLGEK), and 117 to 149 (LSDEEVDEMIQAADTDGDGQVNYEEFVHMLVSK). The Ca(2+) site is built by aspartate 21, aspartate 23, aspartate 25, serine 27, glutamate 32, aspartate 57, aspartate 59, asparagine 61, threonine 63, glutamate 68, aspartate 94, aspartate 96, asparagine 98, glutamate 105, aspartate 130, aspartate 132, aspartate 134, glutamine 136, and glutamate 141.

The protein belongs to the calmodulin family. Interacts with MYO10, the interaction is calcium-dependent and essential for MYO10 function in filopodial extension.

Its function is as follows. May function as a specific light chain of unconventional myosin-10 (MYO10), also enhances MYO10 translation, possibly by acting as a chaperone for the emerging MYO10 heavy chain protein. May compete with calmodulin by binding, with different affinities, to cellular substrates. The sequence is that of Calmodulin-like protein 3 (Calml3) from Mus musculus (Mouse).